The sequence spans 105 residues: Secreted RxLR effector protein 158 (105 aa).

An N-terminal signal peptide occupies residues 1 to 22; it reads MRGAHYVAIVLLVAAGGQTAAG. A RxLR-dEER motif is present at residues 50 to 71; the sequence is RALQASRNPKDDLMFSAGDEER.

This sequence belongs to the RxLR effector family.

The protein localises to the secreted. Its subcellular location is the host nucleus. It localises to the host cytoplasm. Its function is as follows. Secreted effector that partially suppresses the host cell death induced by cell death-inducing proteins. The polypeptide is Secreted RxLR effector protein 158 (Plasmopara viticola (Downy mildew of grapevine)).